The sequence spans 259 residues: Putative zinc metalloprotease Rip2 (259 aa).

Transmembrane regions (helical) follow at residues 14-34 (PIFL…WIAA) and 39-59 (PLSY…SLCL). His-60 contributes to the Zn(2+) binding site. Residue Glu-61 is part of the active site. Zn(2+) is bound at residue His-64. 4 helical membrane-spanning segments follow: residues 96-116 (LGLP…GAVY), 129-149 (IVSL…LGLT), 159-179 (VFWS…VLNL), and 203-223 (LAPA…TPAL).

The protein belongs to the peptidase M50B family. Zn(2+) is required as a cofactor.

Its subcellular location is the cell membrane. The polypeptide is Putative zinc metalloprotease Rip2 (rip2) (Mycolicibacterium smegmatis (strain ATCC 700084 / mc(2)155) (Mycobacterium smegmatis)).